A 91-amino-acid chain; its full sequence is Small ribosomal subunit protein uS19 (91 aa).

The protein belongs to the universal ribosomal protein uS19 family.

In terms of biological role, protein S19 forms a complex with S13 that binds strongly to the 16S ribosomal RNA. The polypeptide is Small ribosomal subunit protein uS19 (Shouchella clausii (strain KSM-K16) (Alkalihalobacillus clausii)).